The chain runs to 349 residues: DNA-directed RNA polymerase subunit Rpo1N (349 aa).

A disordered region spans residues 306–349 (EDEGEEFAGEQATNLSESADDRMDRDRPSSHGAAPIDVPEVGDD). Positions 324-334 (ADDRMDRDRPS) are enriched in basic and acidic residues.

This sequence belongs to the RNA polymerase beta' chain family. In terms of assembly, part of the RNA polymerase complex.

Its subcellular location is the cytoplasm. It carries out the reaction RNA(n) + a ribonucleoside 5'-triphosphate = RNA(n+1) + diphosphate. In terms of biological role, DNA-dependent RNA polymerase (RNAP) catalyzes the transcription of DNA into RNA using the four ribonucleoside triphosphates as substrates. Forms the clamp head domain. The protein is DNA-directed RNA polymerase subunit Rpo1N of Halococcus morrhuae (Micrococcus morrhuae).